We begin with the raw amino-acid sequence, 366 residues long: Ribosomal RNA large subunit methyltransferase M (366 aa).

S-adenosyl-L-methionine contacts are provided by residues serine 188, 221 to 224, aspartate 240, aspartate 260, and aspartate 277; that span reads CPGG. Lysine 306 serves as the catalytic Proton acceptor.

The protein belongs to the class I-like SAM-binding methyltransferase superfamily. RNA methyltransferase RlmE family. RlmM subfamily. In terms of assembly, monomer.

It is found in the cytoplasm. The enzyme catalyses cytidine(2498) in 23S rRNA + S-adenosyl-L-methionine = 2'-O-methylcytidine(2498) in 23S rRNA + S-adenosyl-L-homocysteine + H(+). In terms of biological role, catalyzes the 2'-O-methylation at nucleotide C2498 in 23S rRNA. This Escherichia coli O45:K1 (strain S88 / ExPEC) protein is Ribosomal RNA large subunit methyltransferase M.